Here is a 171-residue protein sequence, read N- to C-terminus: Small ribosomal subunit protein uS4 (171 aa).

The S4 RNA-binding domain occupies 104 to 168 (RRLQTIVYKK…SPFKERAEEA (65 aa)).

This sequence belongs to the universal ribosomal protein uS4 family. In terms of assembly, part of the 30S ribosomal subunit. Contacts protein S5. The interaction surface between S4 and S5 is involved in control of translational fidelity.

One of the primary rRNA binding proteins, it binds directly to 16S rRNA where it nucleates assembly of the body of the 30S subunit. Functionally, with S5 and S12 plays an important role in translational accuracy. This chain is Small ribosomal subunit protein uS4, found in Aeropyrum pernix (strain ATCC 700893 / DSM 11879 / JCM 9820 / NBRC 100138 / K1).